Reading from the N-terminus, the 1083-residue chain is Solute carrier family 12 member 7 (1083 aa).

The segment at 1–52 is disordered; the sequence is MPTNFTVVPVEAHADGGGDETAERTEAPGTPEGPEPERPSPGDGNPRENSPF. Residues 1 to 119 are Cytoplasmic-facing; it reads MPTNFTVVPV…RREAKAPRMG (119 aa). Residues 12 to 26 show a composition bias toward basic and acidic residues; sequence AHADGGGDETAERTE. Thr30 is subject to Phosphothreonine. Phosphoserine occurs at positions 50 and 62. The chain crosses the membrane as a discontinuously helical span at residues 120-142; the sequence is TFIGVYLPCLQNILGVILFLRLT. K(+) is bound by residues Asn131 and Ile132. Val135 provides a ligand contact to chloride. Over 143 to 149 the chain is Extracellular; that stretch reads WIVGVAG. A helical membrane pass occupies residues 150-172; it reads VLESFLIVAMCCTCTMLTAISMS. Over 173-196 the chain is Cytoplasmic; it reads AIATNGVVPAGGSYYMISRSLGPE. A helical membrane pass occupies residues 197-225; that stretch reads FGGAVGLCFYLGTTFAGAMYILGTIEIFL. Residues 226 to 249 are Extracellular-facing; the sequence is TYISPGAAIFQAEAAGGEAAAMLH. 2 consecutive transmembrane segments (helical) span residues 250–270 and 272–300; these read NMRV…FVGV and YVNK…KSAF. Residues 301-419 lie on the Extracellular side of the membrane; sequence DPPDIPVCLL…PYVLTDIAAS (119 aa). 2 disulfide bridges follow: Cys308–Cys323 and Cys343–Cys352. Residue Asn312 is glycosylated (N-linked (GlcNAc...) asparagine). Asn360 carries an N-linked (GlcNAc...) asparagine glycan. Residues 420 to 440 traverse the membrane as a helical segment; sequence FTLLVGIYFPSVTGIMAGSNR. Residues Pro429 and Thr432 each coordinate K(+). Residue Pro429 participates in chloride binding. The chloride site is built by Gly433 and Ile434. Topologically, residues 441–450 are cytoplasmic; that stretch reads SGDLKDAQKS. Residues 451 to 473 traverse the membrane as a helical segment; sequence IPTGTILAIVTTSFIYLSCIVLF. Over 474 to 504 the chain is Extracellular; that stretch reads GACIEGVVLRDKFGEALQGNLVIGMLAWPSP. A helical transmembrane segment spans residues 505-531; it reads WVIVIGSFFSTCGAGLQSLTGAPRLLQ. Over 532–554 the chain is Cytoplasmic; sequence AIARDGIVPFLQVFGHGKANGEP. The next 2 membrane-spanning stretches (helical) occupy residues 555–571 and 574–598; these read TWAL…GILI and LDSV…ACAV. Residue Tyr589 coordinates chloride. Over 599–612 the chain is Cytoplasmic; the sequence is QTLLRTPNWRPRFK. 2 consecutive transmembrane segments (helical) span residues 613-632 and 636-651; these read FYHW…LMFI and YYAL…IYKY. The Cytoplasmic portion of the chain corresponds to 652-1083; it reads IEYRGAEKEW…GGREVITIYS (432 aa). Positions 664-680 are scissor helix; sequence GIRGLSLNAARYALLRV. 2 positions are modified to phosphothreonine: Thr973 and Thr980.

The protein belongs to the SLC12A transporter family. K/Cl co-transporter subfamily. As to quaternary structure, homodimer; adopts a domain-swap conformation at the scissor helices connecting the transmembrane domain and C-terminal domain. Heterodimer with K-Cl cotransporter SLC12A5. In terms of tissue distribution, detected in muscle, brain, lung, heart and kidney.

It localises to the cell membrane. The catalysed reaction is K(+)(in) + chloride(in) = K(+)(out) + chloride(out). Activated by N-ethylmaleimide (NEM). Inhibited by furosemide, DIDS and bumetanide. The inhibition is much stronger in the presence of 50 mM K(+) in the uptake medium. Inhibited by DIOA. Inhibited by WNK3. Functionally, mediates electroneutral potassium-chloride cotransport when activated by cell swelling. May mediate K(+) uptake into Deiters' cells in the cochlea and contribute to K(+) recycling in the inner ear. Important for the survival of cochlear outer and inner hair cells and the maintenance of the organ of Corti. May be required for basolateral Cl(-) extrusion in the kidney and contribute to renal acidification. The protein is Solute carrier family 12 member 7 of Homo sapiens (Human).